Reading from the N-terminus, the 332-residue chain is 4-hydroxy-3-methylbut-2-enyl diphosphate reductase (332 aa).

Position 13 (C13) interacts with [4Fe-4S] cluster. 2 residues coordinate (2E)-4-hydroxy-3-methylbut-2-enyl diphosphate: H41 and H75. H41 and H75 together coordinate dimethylallyl diphosphate. Isopentenyl diphosphate-binding residues include H41 and H75. C97 contacts [4Fe-4S] cluster. A (2E)-4-hydroxy-3-methylbut-2-enyl diphosphate-binding site is contributed by H125. Position 125 (H125) interacts with dimethylallyl diphosphate. An isopentenyl diphosphate-binding site is contributed by H125. The active-site Proton donor is the E127. A (2E)-4-hydroxy-3-methylbut-2-enyl diphosphate-binding site is contributed by T168. Residue C229 participates in [4Fe-4S] cluster binding. (2E)-4-hydroxy-3-methylbut-2-enyl diphosphate-binding residues include S257, S258, N259, and S306. 4 residues coordinate dimethylallyl diphosphate: S257, S258, N259, and S306. Isopentenyl diphosphate-binding residues include S257, S258, N259, and S306.

This sequence belongs to the IspH family. It depends on [4Fe-4S] cluster as a cofactor.

It catalyses the reaction isopentenyl diphosphate + 2 oxidized [2Fe-2S]-[ferredoxin] + H2O = (2E)-4-hydroxy-3-methylbut-2-enyl diphosphate + 2 reduced [2Fe-2S]-[ferredoxin] + 2 H(+). The catalysed reaction is dimethylallyl diphosphate + 2 oxidized [2Fe-2S]-[ferredoxin] + H2O = (2E)-4-hydroxy-3-methylbut-2-enyl diphosphate + 2 reduced [2Fe-2S]-[ferredoxin] + 2 H(+). The protein operates within isoprenoid biosynthesis; dimethylallyl diphosphate biosynthesis; dimethylallyl diphosphate from (2E)-4-hydroxy-3-methylbutenyl diphosphate: step 1/1. It functions in the pathway isoprenoid biosynthesis; isopentenyl diphosphate biosynthesis via DXP pathway; isopentenyl diphosphate from 1-deoxy-D-xylulose 5-phosphate: step 6/6. Its function is as follows. Catalyzes the conversion of 1-hydroxy-2-methyl-2-(E)-butenyl 4-diphosphate (HMBPP) into a mixture of isopentenyl diphosphate (IPP) and dimethylallyl diphosphate (DMAPP). Acts in the terminal step of the DOXP/MEP pathway for isoprenoid precursor biosynthesis. In Chlorobaculum parvum (strain DSM 263 / NCIMB 8327) (Chlorobium vibrioforme subsp. thiosulfatophilum), this protein is 4-hydroxy-3-methylbut-2-enyl diphosphate reductase.